Here is a 732-residue protein sequence, read N- to C-terminus: Catalase-peroxidase (732 aa).

Positions 1–45 (MDTKVDNAGKCPVVHTHTAHGGRSNRDWWPNQLNLRILHQNSSLS) are cleaved as a signal peptide. A cross-link (tryptophyl-tyrosyl-methioninium (Trp-Tyr) (with M-246)) is located at residues 97–220 (WHSAGTYRTG…LSAVQMGLIY (124 aa)). The Proton acceptor role is filled by histidine 98. Residues 220–246 (YVNPEGPNGNPDPLAAARDIRETFARM) constitute a cross-link (tryptophyl-tyrosyl-methioninium (Tyr-Met) (with W-97)). A heme b-binding site is contributed by histidine 261.

This sequence belongs to the peroxidase family. Peroxidase/catalase subfamily. Homodimer or homotetramer. Heme b is required as a cofactor. In terms of processing, formation of the three residue Trp-Tyr-Met cross-link is important for the catalase, but not the peroxidase activity of the enzyme.

It carries out the reaction H2O2 + AH2 = A + 2 H2O. It catalyses the reaction 2 H2O2 = O2 + 2 H2O. Its function is as follows. Bifunctional enzyme with both catalase and broad-spectrum peroxidase activity. This Rhizobium rhizogenes (strain K84 / ATCC BAA-868) (Agrobacterium radiobacter) protein is Catalase-peroxidase.